Consider the following 64-residue polypeptide: Conotoxin Im11.2 (64 aa).

The N-terminal stretch at 1 to 26 (MMFRLTSVSCFLLVIVCLNLVVLTNA) is a signal peptide. 4 disulfide bridges follow: Cys27-Cys41, Cys34-Cys46, Cys40-Cys50, and Cys45-Cys54. An Aspartic acid 1-amide modification is found at Asp57. Residues 61–64 (ATFQ) constitute a propeptide that is removed on maturation.

Belongs to the conotoxin I2 superfamily. As to expression, expressed by the venom duct.

Its subcellular location is the secreted. The protein is Conotoxin Im11.2 of Conus imperialis (Imperial cone).